The following is a 416-amino-acid chain: Alpha-1,3/1,6-mannosyltransferase ALG2 (416 aa).

Topologically, residues 1–84 (MAEEQGRERD…LPRGLGWGGR (84 aa)) are cytoplasmic. Positions 85 to 105 (GAAVCAYVRMVFLALYVLFLA) form an intramembrane region, helical. Topologically, residues 106–416 (DEEFDVVVCD…LYRYVTKLLV (311 aa)) are cytoplasmic.

The protein belongs to the glycosyltransferase group 1 family. Glycosyltransferase 4 subfamily.

The protein resides in the endoplasmic reticulum membrane. The catalysed reaction is a beta-D-Man-(1-&gt;4)-beta-D-GlcNAc-(1-&gt;4)-alpha-D-GlcNAc-diphospho-di-trans,poly-cis-dolichol + GDP-alpha-D-mannose = an alpha-D-Man-(1-&gt;3)-beta-D-Man-(1-&gt;4)-beta-D-GlcNAc-(1-&gt;4)-alpha-D-GlcNAc-diphospho-di-trans,poly-cis-dolichol + GDP + H(+). The enzyme catalyses an alpha-D-Man-(1-&gt;3)-beta-D-Man-(1-&gt;4)-beta-D-GlcNAc-(1-&gt;4)-alpha-D-GlcNAc-diphospho-di-trans,poly-cis-dolichol + GDP-alpha-D-mannose = an alpha-D-Man-(1-&gt;3)-[alpha-D-Man-(1-&gt;6)]-beta-D-Man-(1-&gt;4)-beta-D-GlcNAc-(1-&gt;4)-alpha-D-GlcNAc-diphospho-di-trans,poly-cis-dolichol + GDP + H(+). It carries out the reaction a beta-D-Man-(1-&gt;4)-beta-D-GlcNAc-(1-&gt;4)-alpha-D-GlcNAc-diphospho-di-trans,poly-cis-dolichol + GDP-alpha-D-mannose = an alpha-D-Man-(1-&gt;6)-beta-D-Man-(1-&gt;4)-beta-D-GlcNAc-(1-&gt;4)-alpha-D-GlcNAc-diphospho-di-trans,poly-cis-dolichol + GDP + H(+). It catalyses the reaction an alpha-D-Man-(1-&gt;6)-beta-D-Man-(1-&gt;4)-beta-D-GlcNAc-(1-&gt;4)-alpha-D-GlcNAc-diphospho-di-trans,poly-cis-dolichol + GDP-alpha-D-mannose = an alpha-D-Man-(1-&gt;3)-[alpha-D-Man-(1-&gt;6)]-beta-D-Man-(1-&gt;4)-beta-D-GlcNAc-(1-&gt;4)-alpha-D-GlcNAc-diphospho-di-trans,poly-cis-dolichol + GDP + H(+). It functions in the pathway protein modification; protein glycosylation. Its function is as follows. Mannosyltransferase that operates in the biosynthetic pathway of dolichol-linked oligosaccharides, the glycan precursors employed in protein asparagine (N)-glycosylation. The assembly of dolichol-linked oligosaccharides begins on the cytosolic side of the endoplasmic reticulum membrane and finishes in its lumen. The sequential addition of sugars to dolichol pyrophosphate produces dolichol-linked oligosaccharides containing fourteen sugars, including two GlcNAcs, nine mannoses and three glucoses. Once assembled, the oligosaccharide is transferred from the lipid to nascent proteins by oligosaccharyltransferases. Catalyzes, on the cytoplasmic face of the endoplasmic reticulum, the addition of the second and third mannose residues to the dolichol-linked oligosaccharide chain, to produce Man3GlcNAc(2)-PP-dolichol core oligosaccharide. Man3GlcNAc(2)-PP-dolichol is a substrate for ALG11, the following enzyme in the biosynthetic pathway. While both alpha 1,3 and alpha 1,6 linkages are possible, the sequential addition of alpha 1,3 followed by alpha 1,6 is probably the preferred route. The protein is Alpha-1,3/1,6-mannosyltransferase ALG2 (ALG2) of Homo sapiens (Human).